A 422-amino-acid chain; its full sequence is Mannosylglycerate synthase (422 aa).

GDP-alpha-D-mannose contacts are provided by residues 7 to 11 (PFKEE), Gln66, Lys77, Asp101, and 101 to 102 (DS). (R)-glycerate is bound by residues Arg132 and 137–140 (AMIT). GDP-alpha-D-mannose-binding residues include Leu164, Asp193, and Tyr221.

Belongs to the glycosyltransferase 78 family.

It carries out the reaction (R)-glycerate + GDP-alpha-D-mannose = (2R)-2-O-(alpha-D-mannosyl)-glycerate + GDP + H(+). The catalysed reaction is GDP-alpha-D-glucose + (R)-glycerate = (2R)-2-O-(alpha-D-glucopyranosyl)-glycerate + GDP + H(+). With respect to regulation, activity is not dependent on divalent cations, but it is enhanced by Mg(2+). Involved in the biosynthesis of the compatible solute alpha-D-mannosyl-glycerate (MG). Catalyzes the condensation of GDP-alpha-D-mannose (GDP-Man) with D-glycerate to produce alpha-D-mannosyl-glycerate. Can also use GDP-alpha-D-glucose (GDP-Glc) as sugar donor to produce alpha-D-glucopyranosyl-glycerate (GG). In Selaginella moellendorffii (Spikemoss), this protein is Mannosylglycerate synthase.